We begin with the raw amino-acid sequence, 510 residues long: ATP synthase subunit alpha (510 aa).

Residue 169 to 176 (GDRQTGKT) coordinates ATP.

It belongs to the ATPase alpha/beta chains family. F-type ATPases have 2 components, CF(1) - the catalytic core - and CF(0) - the membrane proton channel. CF(1) has five subunits: alpha(3), beta(3), gamma(1), delta(1), epsilon(1). CF(0) has three main subunits: a(1), b(2) and c(9-12). The alpha and beta chains form an alternating ring which encloses part of the gamma chain. CF(1) is attached to CF(0) by a central stalk formed by the gamma and epsilon chains, while a peripheral stalk is formed by the delta and b chains.

It is found in the cell inner membrane. The enzyme catalyses ATP + H2O + 4 H(+)(in) = ADP + phosphate + 5 H(+)(out). Produces ATP from ADP in the presence of a proton gradient across the membrane. The alpha chain is a regulatory subunit. This is ATP synthase subunit alpha from Rickettsia felis (strain ATCC VR-1525 / URRWXCal2) (Rickettsia azadi).